The sequence spans 139 residues: Probable disulfide formation protein C 1 (139 aa).

A helical transmembrane segment spans residues 8 to 27; the sequence is EYALFTAWGASFIATLGSLY. Cys-37 and Cys-40 are disulfide-bonded. Transmembrane regions (helical) follow at residues 42–61 and 68–85; these read YQRI…VVKK and YSLP…YHYV. A disulfide bridge connects residues Cys-99 and Cys-104. Residues 113–135 traverse the membrane as a helical segment; it reads GFVTIPFLALIGFITIAVCSFIV.

This sequence belongs to the DsbB family. BdbC subfamily.

It is found in the cell membrane. In terms of biological role, required for disulfide bond formation in some proteins. The chain is Probable disulfide formation protein C 1 (bdbC1) from Bacillus anthracis.